A 207-amino-acid chain; its full sequence is Large ribosomal subunit protein uL4 (207 aa).

The disordered stretch occupies residues 49–78; sequence HAVKNRSAVSGGGRKPWRQKGTGRARQGSI.

It belongs to the universal ribosomal protein uL4 family. Part of the 50S ribosomal subunit.

Its function is as follows. One of the primary rRNA binding proteins, this protein initially binds near the 5'-end of the 23S rRNA. It is important during the early stages of 50S assembly. It makes multiple contacts with different domains of the 23S rRNA in the assembled 50S subunit and ribosome. Functionally, forms part of the polypeptide exit tunnel. This is Large ribosomal subunit protein uL4 from Streptococcus equi subsp. zooepidemicus (strain MGCS10565).